The chain runs to 365 residues: LIM and cysteine-rich domains protein 1 (365 aa).

A Phosphoserine modification is found at Ser16. In terms of domain architecture, PET spans 99 to 206 (MIMTNPIATG…GEVALPGQGG (108 aa)). The disordered stretch occupies residues 200–235 (ALPGQGGLPKEEGKQQEKPEGAETTAATTNGSLSDP). A compositionally biased stretch (basic and acidic residues) spans 208–220 (PKEEGKQQEKPEG). 2 LIM zinc-binding domains span residues 241–306 (YVCE…SLRP) and 307–365 (RCSG…SKRS).

Interacts with GATA1 and GATA4. Interacts with beta-dystroglycan. Interacts with GATA6. Expressed in the heart (at protein level). Expressed in many tissues with highest abundance in skeletal muscle.

The protein localises to the cytoplasm. The protein resides in the nucleus. In terms of biological role, transcriptional cofactor that restricts GATA6 function by inhibiting DNA-binding, resulting in repression of GATA6 transcriptional activation of downstream target genes. Represses GATA6-mediated trans activation of lung- and cardiac tissue-specific promoters. Inhibits DNA-binding by GATA4 and GATA1 to the cTNC promoter. Plays a critical role in the development of cardiac hypertrophy via activation of calcineurin/nuclear factor of activated T-cells signaling pathway. In Homo sapiens (Human), this protein is LIM and cysteine-rich domains protein 1 (LMCD1).